The sequence spans 99 residues: uncharacterized protein (99 aa).

Belongs to the HesB/IscA family.

This is an uncharacterized protein from Staphylococcus haemolyticus (strain JCSC1435).